We begin with the raw amino-acid sequence, 672 residues long: uncharacterized protein (672 aa).

Positions 1 to 10 are enriched in basic and acidic residues; sequence MAKSDGDDPL. The disordered stretch occupies residues 1 to 40; that stretch reads MAKSDGDDPLRPASPRLRSSRRHSLRYSAYTGGPDPLAPP.

This is an uncharacterized protein from Mycobacterium tuberculosis (strain CDC 1551 / Oshkosh).